A 206-amino-acid polypeptide reads, in one-letter code: Cytochrome b6-f complex iron-sulfur subunit, chloroplastic (206 aa).

The N-terminal 29 residues, 1–29 (MAMITSRRAAAPCKAQATRRSRVMSVVRA), are a transit peptide targeting the chloroplast. A helical transmembrane segment spans residues 48–68 (ILLGGASLPVGSLALGYGAFF). One can recognise a Rieske domain in the interval 92–188 (ANAWLATHQK…CDVQEDGLVT (97 aa)). [2Fe-2S] cluster contacts are provided by cysteine 134, histidine 136, cysteine 152, and histidine 155. An intrachain disulfide couples cysteine 139 to cysteine 154.

The protein belongs to the Rieske iron-sulfur protein family. As to quaternary structure, the 4 large subunits of the cytochrome b6-f complex are cytochrome b6, subunit IV (17 kDa polypeptide, petD), cytochrome f and the Rieske protein, while the 4 small subunits are petG, petL, petM and petN. The complex functions as a dimer. It depends on [2Fe-2S] cluster as a cofactor.

It localises to the plastid. Its subcellular location is the chloroplast thylakoid membrane. It carries out the reaction 2 oxidized [plastocyanin] + a plastoquinol + 2 H(+)(in) = 2 reduced [plastocyanin] + a plastoquinone + 4 H(+)(out). Its function is as follows. Component of the cytochrome b6-f complex, which mediates electron transfer between photosystem II (PSII) and photosystem I (PSI), cyclic electron flow around PSI, and state transitions. This Volvox carteri (Green alga) protein is Cytochrome b6-f complex iron-sulfur subunit, chloroplastic (petC).